A 248-amino-acid chain; its full sequence is Triosephosphate isomerase (248 aa).

Asn-9–Lys-11 lines the substrate pocket. His-95 serves as the catalytic Electrophile. Residue Glu-166 is the Proton acceptor of the active site. Substrate contacts are provided by residues Gly-172, Ser-210, and Gly-231–Gly-232.

It belongs to the triosephosphate isomerase family. In terms of assembly, homodimer.

It localises to the cytoplasm. It catalyses the reaction D-glyceraldehyde 3-phosphate = dihydroxyacetone phosphate. The protein operates within carbohydrate biosynthesis; gluconeogenesis. It functions in the pathway carbohydrate degradation; glycolysis; D-glyceraldehyde 3-phosphate from glycerone phosphate: step 1/1. Involved in the gluconeogenesis. Catalyzes stereospecifically the conversion of dihydroxyacetone phosphate (DHAP) to D-glyceraldehyde-3-phosphate (G3P). This is Triosephosphate isomerase from Delftia acidovorans (strain DSM 14801 / SPH-1).